A 701-amino-acid polypeptide reads, in one-letter code: DNA ligase (701 aa).

NAD(+) contacts are provided by residues 43–47 (DADYD), 92–93 (SL), and glutamate 126. Lysine 128 functions as the N6-AMP-lysine intermediate in the catalytic mechanism. Positions 149, 186, 302, and 326 each coordinate NAD(+). Residues cysteine 417, cysteine 420, cysteine 440, and cysteine 446 each coordinate Zn(2+). One can recognise a BRCT domain in the interval 622 to 701 (ETGSPVTGKT…DEWLALIGET (80 aa)).

This sequence belongs to the NAD-dependent DNA ligase family. LigA subfamily. The cofactor is Mg(2+). Mn(2+) serves as cofactor.

The catalysed reaction is NAD(+) + (deoxyribonucleotide)n-3'-hydroxyl + 5'-phospho-(deoxyribonucleotide)m = (deoxyribonucleotide)n+m + AMP + beta-nicotinamide D-nucleotide.. In terms of biological role, DNA ligase that catalyzes the formation of phosphodiester linkages between 5'-phosphoryl and 3'-hydroxyl groups in double-stranded DNA using NAD as a coenzyme and as the energy source for the reaction. It is essential for DNA replication and repair of damaged DNA. This Hyphomonas neptunium (strain ATCC 15444) protein is DNA ligase.